We begin with the raw amino-acid sequence, 269 residues long: Glucosyl-3-phosphoglycerate/mannosyl-3-phosphoglycerate phosphatase (269 aa).

Catalysis depends on D6, which acts as the Nucleophile. D6, D8, and D210 together coordinate Mg(2+).

It belongs to the HAD-like hydrolase superfamily. MPGP family. As to quaternary structure, monomer. Requires Co(2+) as cofactor. The cofactor is Mg(2+).

The catalysed reaction is (2R)-2-O-(alpha-D-glucopyranosyl)-3-phospho-glycerate + H2O = (2R)-2-O-(alpha-D-glucopyranosyl)-glycerate + phosphate. It carries out the reaction 2-O-(alpha-D-mannosyl)-3-phosphoglycerate + H2O = (2R)-2-O-(alpha-D-mannosyl)-glycerate + phosphate. Its function is as follows. Involved in the biosynthesis of glucosylglycerate. Catalyzes the dephosphorylation of glucosyl-3-phosphoglycerate (GPG) and mannosyl-3-phosphoglycerate (MPG) to glucosylglycerate (GG) and mannosylglycerate (MG), respectively. In Persephonella marina (strain DSM 14350 / EX-H1), this protein is Glucosyl-3-phosphoglycerate/mannosyl-3-phosphoglycerate phosphatase.